Consider the following 77-residue polypeptide: U10-lycotoxin-Ls1d (77 aa).

An N-terminal signal peptide occupies residues 1–20; it reads MKLIIFTGLFLFAIVSLIEA. Residues 21–26 constitute a propeptide that is removed on maturation; that stretch reads EEESGR.

This sequence belongs to the neurotoxin 19 (CSTX) family. 09 (U10-Lctx) subfamily. Post-translationally, contains 4 disulfide bonds. As to expression, expressed by the venom gland.

The protein resides in the secreted. This Lycosa singoriensis (Wolf spider) protein is U10-lycotoxin-Ls1d.